Consider the following 163-residue polypeptide: ATP synthase subunit b (163 aa).

Residues 1-11 (MLWKANVWVLG) constitute a propeptide that is removed on maturation. A helical transmembrane segment spans residues 16–36 (GISGGTIIYQLLMFIILLALL).

Belongs to the ATPase B chain family. F-type ATPases have 2 components, F(1) - the catalytic core - and F(0) - the membrane proton channel. F(1) has five subunits: alpha(3), beta(3), gamma(1), delta(1), epsilon(1). F(0) has three main subunits: a(1), b(2) and c(10-14). The alpha and beta chains form an alternating ring which encloses part of the gamma chain. F(1) is attached to F(0) by a central stalk formed by the gamma and epsilon chains, while a peripheral stalk is formed by the delta and b chains.

It localises to the cell membrane. Its function is as follows. F(1)F(0) ATP synthase produces ATP from ADP in the presence of a proton or sodium gradient. F-type ATPases consist of two structural domains, F(1) containing the extramembraneous catalytic core and F(0) containing the membrane proton channel, linked together by a central stalk and a peripheral stalk. During catalysis, ATP synthesis in the catalytic domain of F(1) is coupled via a rotary mechanism of the central stalk subunits to proton translocation. Component of the F(0) channel, it forms part of the peripheral stalk, linking F(1) to F(0). The protein is ATP synthase subunit b of Bacillus sp. (strain PS3).